The primary structure comprises 481 residues: Sialic acid-binding Ig-like lectin 16 (481 aa).

The N-terminal stretch at 1-16 is a signal peptide; sequence MLLLPLLLPVLGAGSL. At 17–434 the chain is on the extracellular side; it reads NKDPSYSLQV…VHCKSGPMTG (418 aa). The region spanning 19-122 is the Ig-like V-type domain; sequence DPSYSLQVQR…DEAWYFFRVE (104 aa). 4 cysteine pairs are disulfide-bonded: C37/C174, C42/C102, C165/C216, and C259/C306. Residues N43 and N78 are each glycosylated (N-linked (GlcNAc...) asparagine). Residue R120 coordinates N-acetylneuraminate. Ig-like C2-type domains are found at residues 147–232, 238–322, and 327–424; these read PDVY…RTVR, LELQ…LDLS, and PENL…LSFS. N338 and N347 each carry an N-linked (GlcNAc...) asparagine glycan. A disulfide bridge links C363 with C408. The helical transmembrane segment at 435 to 455 threads the bilayer; the sequence is VVLVAVGEVAMKILLLCLCLI. At 456–481 the chain is on the cytoplasmic side; it reads LLRVRSCRRKAARAALGMEAADAVTD.

The protein belongs to the immunoglobulin superfamily. SIGLEC (sialic acid binding Ig-like lectin) family. In terms of tissue distribution, expressed in bone marrow, fetal brain, fetal liver, lung and salivary gland. Detected in brain, macrophage, cancerous esophagus and lung at protein level.

The protein resides in the membrane. Functionally, putative adhesion molecule that mediates sialic-acid dependent binding to cells. The protein is Sialic acid-binding Ig-like lectin 16 (SIGLEC16) of Homo sapiens (Human).